Here is a 59-residue protein sequence, read N- to C-terminus: Large ribosomal subunit protein uL30 (59 aa).

It belongs to the universal ribosomal protein uL30 family. As to quaternary structure, part of the 50S ribosomal subunit.

The sequence is that of Large ribosomal subunit protein uL30 from Geotalea uraniireducens (strain Rf4) (Geobacter uraniireducens).